Consider the following 404-residue polypeptide: Serine/threonine transporter SstT (404 aa).

Transmembrane regions (helical) follow at residues 12–32 (GGNLVLRIAIGLVLGACLALV), 53–73 (AIAPILVFVLVLSAIANKEVG), 81–101 (ILVMYVLGTFVAALTAVVLSF), 140–160 (ALANANFIGILAWAIGLGIAL), 177–197 (AVSFVVKVVIAFAPIGVFGLV), 216–236 (LGVLLGAMVIVAFVLNPLIVF), 287–307 (VAIPLGATINMAGAAITVTVL), 329–349 (IVASVCACGASGVAGGSLLLI), and 356–376 (FNIPNDIAAQVIGVGFIIGVI).

This sequence belongs to the dicarboxylate/amino acid:cation symporter (DAACS) (TC 2.A.23) family.

Its subcellular location is the cell inner membrane. It catalyses the reaction L-serine(in) + Na(+)(in) = L-serine(out) + Na(+)(out). The enzyme catalyses L-threonine(in) + Na(+)(in) = L-threonine(out) + Na(+)(out). Its function is as follows. Involved in the import of serine and threonine into the cell, with the concomitant import of sodium (symport system). The protein is Serine/threonine transporter SstT of Actinobacillus pleuropneumoniae serotype 7 (strain AP76).